Consider the following 210-residue polypeptide: DNA-directed RNA polymerases I, II, and III subunit RPABC1 (210 aa).

N-acetylmethionine is present on Met-1. Lys-81 participates in a covalent cross-link: Glycyl lysine isopeptide (Lys-Gly) (interchain with G-Cter in SUMO2).

The protein belongs to the archaeal Rpo5/eukaryotic RPB5 RNA polymerase subunit family. Component of the RNA polymerase I (Pol I), RNA polymerase II (Pol II) and RNA polymerase III (Pol III) complexes consisting of at least 13, 12 and 17 subunits, respectively. Pol I complex consists of a ten-subunit catalytic core composed of POLR1A/RPA1, POLR1B/RPA2, POLR1C/RPAC1, POLR1D/RPAC2, POLR1H/RPA12, POLR2E/RPABC1, POLR2F/RPABC2, POLR2H/RPABC3, POLR2K/RPABC4 and POLR2L/RPABC5; a mobile stalk subunit POLR1F/RPA43 protruding from the core and additional subunits homologous to general transcription factors POLR1E/RPA49 and POLR1G/RPA34. Part of Pol I pre-initiation complex (PIC), in which Pol I core assembles with RRN3 and promoter-bound UTBF and SL1/TIF-IB complex. Pol II complex contains a ten-subunit catalytic core composed of POLR2A/RPB1, POLR2B/RPB2, POLR2C/RPB3, POLR2I/RPB9, POLR2J/RPB11, POLR2E/RPABC1, POLR2F/RPABC2, POLR2H/RPABC3, POLR2K/RPABC4 and POLR2L/RPABC5 and a mobile stalk composed of two subunits POLR2D/RPB4 and POLR2G/RPB7. Part of Pol II(G) complex, in which Pol II core associates with an additional subunit POLR2M; unlike conventional Pol II, Pol II(G) functions as a transcriptional repressor. Part of TBP-based Pol II pre-initiation complex (PIC), in which Pol II core assembles with general transcription factors and other specific initiation factors including GTF2E1, GTF2E2, GTF2F1, GTF2F2, TCEA1, ERCC2, ERCC3, GTF2H2, GTF2H3, GTF2H4, GTF2H5, GTF2A1, GTF2A2, GTF2B and TBP; this large multi-subunit PIC complex mediates DNA unwinding and targets Pol II core to the transcription start site where the first phosphodiester bond forms. In Pol II complex, this subunit is present in 2-fold molar excess over the other subunits. Pol III complex consists of a ten-subunit catalytic core composed of POLR3A/RPC1, POLR3B/RPC2, POLR1C/RPAC1, POLR1D/RPAC2, POLR3K/RPC10, POLR2E/RPABC1, POLR2F/RPABC2, POLR2H/RPABC3, POLR2K/RPABC4 and POLR2L/RPABC5; a mobile stalk composed of two subunits POLR3H/RPC8 and CRCP/RPC9, protruding from the core and functioning primarily in transcription initiation; and additional subunits homologous to general transcription factors of the RNA polymerase II machinery, POLR3C/RPC3-POLR3F/RPC6-POLR3G/RPC7 heterotrimer required for transcription initiation and POLR3D/RPC4-POLR3E/RPC5 heterodimer involved in both transcription initiation and termination. Component of the PAQosome complex which is responsible for the biogenesis of several protein complexes and which consists of R2TP complex members RUVBL1, RUVBL2, RPAP3 and PIH1D1, URI complex members PFDN2, PFDN6, PDRG1, UXT and URI1 as well as ASDURF, POLR2E and DNAAF10/WDR92. Interacts with URI1.

The protein resides in the nucleus. It localises to the nucleolus. Its function is as follows. DNA-dependent RNA polymerase catalyzes the transcription of DNA into RNA using the four ribonucleoside triphosphates as substrates. Common component of RNA polymerases I, II and III which synthesize ribosomal RNA precursors, mRNA precursors and many functional non-coding RNAs, and small RNAs, such as 5S rRNA and tRNAs, respectively. Pol II is the central component of the basal RNA polymerase II transcription machinery. Pols are composed of mobile elements that move relative to each other. In Pol II, POLR2E/RPABC1 is part of the lower jaw surrounding the central large cleft and thought to grab the incoming DNA template. Seems to be the major component in this process. The polypeptide is DNA-directed RNA polymerases I, II, and III subunit RPABC1 (POLR2E) (Pongo abelii (Sumatran orangutan)).